Consider the following 158-residue polypeptide: UPF0178 protein RPA2191 (158 aa).

Belongs to the UPF0178 family.

The polypeptide is UPF0178 protein RPA2191 (Rhodopseudomonas palustris (strain ATCC BAA-98 / CGA009)).